The sequence spans 530 residues: Ubiquitin carboxyl-terminal hydrolase 17-like protein 10 (530 aa).

In terms of domain architecture, USP spans 80 to 375 (AGLQNMGNTC…QAYVLFYIQK (296 aa)). Cys89 functions as the Nucleophile in the catalytic mechanism. His334 (proton acceptor) is an active-site residue. Basic and acidic residues-rich tracts occupy residues 382 to 392 (SESVSRGREPR) and 398 to 410 (DTDR…ELKR). 2 disordered regions span residues 382-410 (SESV…ELKR) and 477-530 (NHHP…LVCQ). Positions 484–495 (SSLLNLSSTTPT) are enriched in low complexity. Residues 496–505 (DQESMNTGTL) show a composition bias toward polar residues. Over residues 510-524 (GRTRRSKGKNKHSKR) the composition is skewed to basic residues.

This sequence belongs to the peptidase C19 family. USP17 subfamily.

It is found in the nucleus. The protein localises to the endoplasmic reticulum. The catalysed reaction is Thiol-dependent hydrolysis of ester, thioester, amide, peptide and isopeptide bonds formed by the C-terminal Gly of ubiquitin (a 76-residue protein attached to proteins as an intracellular targeting signal).. Its function is as follows. Deubiquitinating enzyme that removes conjugated ubiquitin from specific proteins to regulate different cellular processes that may include cell proliferation, progression through the cell cycle, apoptosis, cell migration, and the cellular response to viral infection. In Homo sapiens (Human), this protein is Ubiquitin carboxyl-terminal hydrolase 17-like protein 10 (USP17L10).